A 189-amino-acid polypeptide reads, in one-letter code: MMKLFCLNIFRFLYTTSFISAVLSFNQRPINMQEVREPRLFELLAETRDCNIFSELIMQFPDYVHLFQQKDQHITVLVPNDAAFQQCKVKPWAIEYKNGVAVKSTDIVHITEQQAQDNILKFVERHIITSSPIEWNNEYKTIDGTDVHVIKKEEEIYINESIHVLCRKKASNGEMWVLNATLSTPSIRE.

The N-terminal stretch at 1–24 (MMKLFCLNIFRFLYTTSFISAVLS) is a signal peptide. Residues 37-182 (EPRLFELLAE…GEMWVLNATL (146 aa)) form the FAS1 domain.

It is found in the cytoplasm. It localises to the nucleus. The protein resides in the membrane. Has a role in sporulation. The polypeptide is FAS1 domain-containing protein mug57 (mug57) (Schizosaccharomyces pombe (strain 972 / ATCC 24843) (Fission yeast)).